Here is a 349-residue protein sequence, read N- to C-terminus: Galactose-1-phosphate uridylyltransferase (349 aa).

29-32 (RAKR) is a binding site for UDP-alpha-D-glucose. Positions 53 and 56 each coordinate Zn(2+). 78–79 (ND) lines the UDP-alpha-D-glucose pocket. A Zn(2+)-binding site is contributed by His-116. Residues Asn-154 and 160–162 (GCS) contribute to the UDP-alpha-D-glucose site. His-165 is a Zn(2+) binding site. Residue His-167 is the Tele-UMP-histidine intermediate of the active site. Residue Gln-169 coordinates UDP-alpha-D-glucose. The Fe cation site is built by Glu-183, His-282, His-297, and His-299. Residues 312-313 (KF), 317-318 (YE), and Gln-324 contribute to the UDP-alpha-D-glucose site.

The protein belongs to the galactose-1-phosphate uridylyltransferase type 1 family. Zn(2+) serves as cofactor.

It carries out the reaction alpha-D-galactose 1-phosphate + UDP-alpha-D-glucose = alpha-D-glucose 1-phosphate + UDP-alpha-D-galactose. Its pathway is carbohydrate metabolism; galactose metabolism. The sequence is that of Galactose-1-phosphate uridylyltransferase (galT) from Haemophilus influenzae (strain ATCC 51907 / DSM 11121 / KW20 / Rd).